The following is a 350-amino-acid chain: Paired box protein Pax-4 (350 aa).

Residues 5 to 131 (GISSMNQLGG…SSINRVLRAL (127 aa)) constitute a DNA-binding region (paired). Residues 8–64 (SMNQLGGLFVNGRPLPLDTRQQIVRLAVSGMRPCDISRILKVSNGCVSKILGRYYRT) form a PAI subdomain region. Residues 83-131 (PVVARIAQLKGECPALFAWEIQRQLCAEGLCTQDKTPSVSSINRVLRAL) are RED subdomain. The interval 153-172 (LTPHSGSETPRGTHPGTGHR) is disordered. The segment at residues 170 to 229 (GHRNRTIFSPSQAEALEKEFQRGQYPDSVARGKLATATSLPEDTVRVWFSNRRAKWRRQE) is a DNA-binding region (homeobox). Residues 278-350 (CYQLCWATAP…ATPTHFSHWP (73 aa)) are transcription repression.

This sequence belongs to the paired homeobox family.

It localises to the nucleus. In terms of biological role, plays an important role in the differentiation and development of pancreatic islet beta cells. Transcriptional repressor that binds to a common element in the glucagon, insulin and somatostatin promoters. Competes with PAX6 for this same promoter binding site. Isoform 2 appears to be a dominant negative form antagonizing PAX4 transcriptional activity. The protein is Paired box protein Pax-4 (PAX4) of Homo sapiens (Human).